The following is an 81-amino-acid chain: UPF0181 protein Spro_2806 (81 aa).

The tract at residues 43–81 (EKHQGDQVSVMFDDEDDDEEYQERPDDQADDDSEEDENY) is disordered. 2 stretches are compositionally biased toward acidic residues: residues 54–63 (FDDEDDDEEY) and 70–81 (QADDDSEEDENY).

It belongs to the UPF0181 family.

This chain is UPF0181 protein Spro_2806, found in Serratia proteamaculans (strain 568).